Consider the following 635-residue polypeptide: 1-deoxy-D-xylulose-5-phosphate synthase (635 aa).

Residues His74 and 115 to 117 (AHS) contribute to the thiamine diphosphate site. Asp146 serves as a coordination point for Mg(2+). Thiamine diphosphate-binding positions include 147–148 (GA), Asn176, Tyr283, and Glu365. Asn176 serves as a coordination point for Mg(2+).

It belongs to the transketolase family. DXPS subfamily. In terms of assembly, homodimer. The cofactor is Mg(2+). It depends on thiamine diphosphate as a cofactor.

It catalyses the reaction D-glyceraldehyde 3-phosphate + pyruvate + H(+) = 1-deoxy-D-xylulose 5-phosphate + CO2. Its pathway is metabolic intermediate biosynthesis; 1-deoxy-D-xylulose 5-phosphate biosynthesis; 1-deoxy-D-xylulose 5-phosphate from D-glyceraldehyde 3-phosphate and pyruvate: step 1/1. Catalyzes the acyloin condensation reaction between C atoms 2 and 3 of pyruvate and glyceraldehyde 3-phosphate to yield 1-deoxy-D-xylulose-5-phosphate (DXP). The chain is 1-deoxy-D-xylulose-5-phosphate synthase from Paraburkholderia xenovorans (strain LB400).